A 143-amino-acid chain; its full sequence is D-aminoacyl-tRNA deacylase (143 aa).

The Gly-cisPro motif, important for rejection of L-amino acids signature appears at 135–136; the sequence is GP.

Belongs to the DTD family. As to quaternary structure, homodimer.

The protein localises to the cytoplasm. It catalyses the reaction glycyl-tRNA(Ala) + H2O = tRNA(Ala) + glycine + H(+). The enzyme catalyses a D-aminoacyl-tRNA + H2O = a tRNA + a D-alpha-amino acid + H(+). Functionally, an aminoacyl-tRNA editing enzyme that deacylates mischarged D-aminoacyl-tRNAs. Also deacylates mischarged glycyl-tRNA(Ala), protecting cells against glycine mischarging by AlaRS. Acts via tRNA-based rather than protein-based catalysis; rejects L-amino acids rather than detecting D-amino acids in the active site. By recycling D-aminoacyl-tRNA to D-amino acids and free tRNA molecules, this enzyme counteracts the toxicity associated with the formation of D-aminoacyl-tRNA entities in vivo and helps enforce protein L-homochirality. The sequence is that of D-aminoacyl-tRNA deacylase from Mycobacterium marinum (strain ATCC BAA-535 / M).